A 265-amino-acid polypeptide reads, in one-letter code: TATA-box-binding protein (265 aa).

Residues 1-40 are disordered; the sequence is MYNPSQAVPVSLHKNQDNQDGGQQRSHYPQISSQQSQSYL. Residues 18–29 are compositionally biased toward polar residues; sequence NQDGGQQRSHYP. Tandem repeats lie at residues 91–167 and 181–258.

This sequence belongs to the TBP family. Belongs to the TFIID complex together with the TBP-associated factors (TAFs). Binds DNA as monomer.

It localises to the nucleus. In terms of biological role, general transcription factor that functions at the core of the DNA-binding multiprotein factor TFIID. Binding of TFIID to the TATA box is the initial transcriptional step of the pre-initiation complex (PIC), playing a role in the activation of eukaryotic genes transcribed by RNA polymerase II. The polypeptide is TATA-box-binding protein (Strongylocentrotus purpuratus (Purple sea urchin)).